The primary structure comprises 1167 residues: MNNNYYGSPLSPEELQHQMHQHQQQQQQQQQQQQQQQQQQQQQQQQQQQQHQHQQQQKTNQHRNAGMMNTPPTTNQGNSTIHASDVTMSGGSDSLDEIIQQNLDEMHRRRSVPQPYGGQTRRLSMFDYANPNDGFSDYQLDNMSGNYGDMTGGMGMSGHSSPYAGQNIMAMSDHSGGYSHMSPNVMGNMMTYPNLNMYHSPPIENPYSSAGLDTIRTDFSMDMNMDSGSVSAASVHPTPGLNKQDDEMMTMEQGFGGGDDANASHQAQQNMGGLTPAMTPAMTPAMTPGVSNFAQGMATPVSQDAASTPATTFQSPSLSATTQTIRIGPPPPPSVTNAPTPAPFTSTPSGGGASQTKSIYSKSGFDMLRALWYVASRKDPKLKLGAVDMSCAFVVCDVTLNDCPIIYVSDNFQNLTGYSRHEIVGRNCRFLQAPDGNVEAGTKREFVENNAVYTLKKTIAEGQEIQQSLINYRKGGKPFLNLLTMIPIPWDTEEIRYFIGFQIDLVECPDAIIGQEGNGPMQVNYTHSDIGQYIWTPPTQKQLEPADGQTLGVDDVSTLLQQCNSKGVASDWHKQSWDKMLLENADDVVHVLSLKGLFLYLSPACKKVLEYDASDLVGTSLSSICHPSDIVPVTRELKEAQQHTPVNIVFRIRRKNSGYTWFESHGTLFNEQGKGRKCIILVGRKRPVFALHRKDLELNGGIGDSEIWTKVSTSGMFLFVSSNVRSLLDLLPENLQGTSMQDLMRKESRAEFGRTIEKARKGKIASCKHEVQNKRGQVLQAYTTFYPGDGGEGQRPTFLLAQTKLLKASSRTLAPATVTVKNMSPGGVPLSPMKGIQTDSDSNTLMGGMSKSGSSDSTGAMVSARSSAGPGQDAALDADNIFDELKTTRCTSWQYELRQMEKVNRMLAEELAQLLSNKKKRKRRKGGGNMVRDCANCHTRNTPEWRRGPSGNRDLCNSCGLRWAKQTGRVSPRTSSRGGNGDSMSKKSNSPSHSSPLHREVGNDSPSTTTATKNSPSLRGSSTTAPGTITTDSGPAVASSASGTGSTTIATSANSAASTVNALGPPATGPSGGSPAQHLPPHLQGTHLNAQAMQRVHQHKQHQQHQQQHQQQHQQQHQQQHQQLQQHQFNPPQSQPLLEGGSGFRGSGMEMTSIREEMGEHQQGLSV.

2 disordered regions span residues Met1–Gly91 and Ser307–Gln355. Positions Gln21–Gln57 are enriched in low complexity. 2 stretches are compositionally biased toward polar residues: residues Thr70–Gly91 and Ser307–Ile325. A compositionally biased stretch (low complexity) spans Val335–Pro348. Positions Lys381 to Val452 constitute a PAS 1 domain. Cys428 carries the post-translational modification S-4a-FMN cysteine. The PAC 1 domain occupies Leu469–Cys508. The region spanning Lys574–Thr644 is the PAS 2 domain. A PAC 2 domain is found at Phe650–Leu691. Positions Arg693–Lys763 constitute a PAS 3 domain. The span at Met849–Met861 shows a compositional bias: low complexity. Disordered stretches follow at residues Met849–Gln872, Lys918–Asn952, Gln966–Thr1047, and Val1060–Val1167. The segment at Cys934–Cys959 adopts a GATA-type zinc-finger fold. A compositionally biased stretch (polar residues) spans Gly968–Arg977. The segment covering Lys986–Ser995 has biased composition (low complexity). Over residues Asp1004–Ser1033 the composition is skewed to polar residues. Low complexity-rich tracts occupy residues Ala1036–Thr1047 and Gln1104–Gln1128.

In terms of assembly, heterodimer of wc-1 and wc-2. Post-translationally, FMN binds covalently to cysteine after exposure to blue light and is reversed in the dark.

It localises to the nucleus. May function as a transcription factor involved in light regulation. Binds and affects blue light regulation of the al-3 gene. Wc-1 and wc-2 proteins interact via homologous PAS domains, bind to promoters of light regulated genes such as frq, and activate transcription. This chain is White collar 1 protein (wc-1), found in Neurospora crassa (strain ATCC 24698 / 74-OR23-1A / CBS 708.71 / DSM 1257 / FGSC 987).